Here is a 387-residue protein sequence, read N- to C-terminus: Succinate--CoA ligase [ADP-forming] subunit beta (387 aa).

One can recognise an ATP-grasp domain in the interval 9-244; sequence KQLFAEYGIP…KTQEDETEVL (236 aa). Residues lysine 46, 53–55, glycine 102, and glutamate 107 each bind ATP; that span reads GRG. Residues asparagine 199 and aspartate 213 each coordinate Mg(2+). Residues asparagine 264 and 321 to 323 contribute to the substrate site; that span reads GIV.

It belongs to the succinate/malate CoA ligase beta subunit family. Heterotetramer of two alpha and two beta subunits. It depends on Mg(2+) as a cofactor.

The catalysed reaction is succinate + ATP + CoA = succinyl-CoA + ADP + phosphate. It carries out the reaction GTP + succinate + CoA = succinyl-CoA + GDP + phosphate. The protein operates within carbohydrate metabolism; tricarboxylic acid cycle; succinate from succinyl-CoA (ligase route): step 1/1. Its function is as follows. Succinyl-CoA synthetase functions in the citric acid cycle (TCA), coupling the hydrolysis of succinyl-CoA to the synthesis of either ATP or GTP and thus represents the only step of substrate-level phosphorylation in the TCA. The beta subunit provides nucleotide specificity of the enzyme and binds the substrate succinate, while the binding sites for coenzyme A and phosphate are found in the alpha subunit. The polypeptide is Succinate--CoA ligase [ADP-forming] subunit beta (Xylella fastidiosa (strain 9a5c)).